Consider the following 278-residue polypeptide: uncharacterized protein (278 aa).

One can recognise a Response regulatory domain in the interval 1–55; it reads MKIRERFSMVDLPVLIITAAIIGHDKYKAFHAGANDILQKPYHYSEFMARIQNLI.

This is an uncharacterized protein from Bacillus subtilis (strain 168).